A 188-amino-acid polypeptide reads, in one-letter code: Large ribosomal subunit protein eL18 (188 aa).

The segment at 147–188 is disordered; the sequence is EAEKHFGPAPGVPHSHTKPYVRSKGRKFERARGRRASRAYKN. Basic residues-rich tracts occupy residues 161-171 and 178-188; these read SHTKPYVRSKG and RGRRASRAYKN.

This sequence belongs to the eukaryotic ribosomal protein eL18 family.

It is found in the cytoplasm. The sequence is that of Large ribosomal subunit protein eL18 (rpl-18) from Caenorhabditis elegans.